Consider the following 100-residue polypeptide: Small ribosomal subunit protein uS14c (100 aa).

It belongs to the universal ribosomal protein uS14 family. As to quaternary structure, part of the 30S ribosomal subunit.

The protein resides in the plastid. The protein localises to the chloroplast. Functionally, binds 16S rRNA, required for the assembly of 30S particles. The polypeptide is Small ribosomal subunit protein uS14c (Chlorella vulgaris (Green alga)).